A 331-amino-acid polypeptide reads, in one-letter code: Mycothiol acetyltransferase (331 aa).

Glutamate 33 provides a ligand contact to 1D-myo-inositol 2-(L-cysteinylamino)-2-deoxy-alpha-D-glucopyranoside. A compositionally biased stretch (low complexity) spans 59–86 (HAAEATAGSAASADPADPADPAAPADPA). A disordered region spans residues 59 to 89 (HAAEATAGSAASADPADPADPAAPADPADPA). 115–120 (RRGHGS) contributes to the acetyl-CoA binding site. The region spanning 183 to 331 (LRLDTFEESR…DVQLRATERG (149 aa)) is the N-acetyltransferase domain. Residues glutamate 210, lysine 249, and glutamate 261 each coordinate 1D-myo-inositol 2-(L-cysteinylamino)-2-deoxy-alpha-D-glucopyranoside. Position 265 to 267 (265 to 267 (VAT)) interacts with acetyl-CoA. A 1D-myo-inositol 2-(L-cysteinylamino)-2-deoxy-alpha-D-glucopyranoside-binding site is contributed by tyrosine 299. 304-309 (NAPALR) lines the acetyl-CoA pocket.

It belongs to the acetyltransferase family. MshD subfamily. Monomer.

It catalyses the reaction 1D-myo-inositol 2-(L-cysteinylamino)-2-deoxy-alpha-D-glucopyranoside + acetyl-CoA = mycothiol + CoA + H(+). In terms of biological role, catalyzes the transfer of acetyl from acetyl-CoA to desacetylmycothiol (Cys-GlcN-Ins) to form mycothiol. This chain is Mycothiol acetyltransferase, found in Brachybacterium faecium (strain ATCC 43885 / DSM 4810 / JCM 11609 / LMG 19847 / NBRC 14762 / NCIMB 9860 / 6-10).